We begin with the raw amino-acid sequence, 706 residues long: Methionine--tRNA ligase (706 aa).

The 'HIGH' region signature appears at 13-23 (PYANGNFHIGH). Zn(2+)-binding residues include Cys144, Cys147, Cys157, and Cys160. The 'KMSKS' region signature appears at 341–345 (KMSKS). An ATP-binding site is contributed by Lys344. Positions 600-706 (DFAKIDLRIA…PGATPGMRVR (107 aa)) constitute a tRNA-binding domain.

Belongs to the class-I aminoacyl-tRNA synthetase family. MetG type 1 subfamily. In terms of assembly, homodimer. Requires Zn(2+) as cofactor.

It is found in the cytoplasm. It catalyses the reaction tRNA(Met) + L-methionine + ATP = L-methionyl-tRNA(Met) + AMP + diphosphate. Is required not only for elongation of protein synthesis but also for the initiation of all mRNA translation through initiator tRNA(fMet) aminoacylation. This is Methionine--tRNA ligase from Paracidovorax citrulli (strain AAC00-1) (Acidovorax citrulli).